The chain runs to 134 residues: UPF0715 membrane protein YoaG (134 aa).

Helical transmembrane passes span 9-29 (LMTL…YSFV), 35-55 (IIAL…YGLF), 72-92 (VMYL…FFVI), and 106-126 (FYYM…SLIL).

This sequence belongs to the UPF0715 family.

The protein localises to the cell membrane. This chain is UPF0715 membrane protein YoaG (yoaG), found in Bacillus subtilis (strain 168).